Reading from the N-terminus, the 348-residue chain is [LysW]-L-2-aminoadipate 6-phosphate reductase (348 aa).

14 to 17 (SGYA) is an NADP(+) binding site. The active site involves Cys-151. Asn-315 provides a ligand contact to NADP(+).

This sequence belongs to the NAGSA dehydrogenase family. Type 1 subfamily. LysY sub-subfamily.

It is found in the cytoplasm. It catalyses the reaction [amino-group carrier protein]-C-terminal-N-(1-carboxy-5-oxopentan-1-yl)-L-glutamine + phosphate + NADP(+) = [amino-group carrier protein]-C-terminal-N-(1-carboxy-5-phosphooxy-5-oxopentan-1-yl)-L-glutamine + NADPH + H(+). Its pathway is amino-acid biosynthesis; L-lysine biosynthesis via AAA pathway; L-lysine from L-alpha-aminoadipate (Thermus route): step 3/5. Catalyzes the NADPH-dependent reduction of [LysW]-aminoadipate 6-phosphate to yield [LysW]-aminoadipate 6-semialdehyde. This chain is [LysW]-L-2-aminoadipate 6-phosphate reductase, found in Deinococcus radiodurans (strain ATCC 13939 / DSM 20539 / JCM 16871 / CCUG 27074 / LMG 4051 / NBRC 15346 / NCIMB 9279 / VKM B-1422 / R1).